The chain runs to 427 residues: MQLPTNVSSLRGMIEVPGDKSISHRAVMLGALASGRTVIDHFLPGADCLSTIDCFRKLGVDIRQDGTTVVVEGAGPGGLREPAAVLDVGNSGTTARLLLGILAGQPFHACLVGDESIAKRPMGRVTKPLREMGARIDGREGGNYTPLSIRGGALRPLRYTSPVASAQVKSAILLAGLFADGVTSVAEPHRSRDHTERMVRLFGGEVNVDGLTVSVAGPQRLRGTHIYVPGDISSAAFFLVAGAIVPNSEITLKNVGLNPTRTGIIDVLTQMGADIAIDNVRNEETEPVGDITVRTSTLRAVEIGGDLIPRLIDEIPIIALLATQAEGTTVIKDASELKVKETNRIHTVVTELKKLGADIEATDDGMMIRGKTPLYADGIVVDSHGDHRIGMMLAVAACIAKGTVRLERSEAVAVSYPAFFADLRSLL.

3-phosphoshikimate-binding residues include lysine 20, serine 21, and arginine 25. Residue lysine 20 coordinates phosphoenolpyruvate. Phosphoenolpyruvate-binding residues include glycine 92 and arginine 120. The 3-phosphoshikimate site is built by serine 165, glutamine 167, aspartate 313, and lysine 340. Residue glutamine 167 participates in phosphoenolpyruvate binding. The Proton acceptor role is filled by aspartate 313. Phosphoenolpyruvate is bound by residues arginine 344 and arginine 388.

This sequence belongs to the EPSP synthase family. In terms of assembly, monomer.

It is found in the cytoplasm. It carries out the reaction 3-phosphoshikimate + phosphoenolpyruvate = 5-O-(1-carboxyvinyl)-3-phosphoshikimate + phosphate. It participates in metabolic intermediate biosynthesis; chorismate biosynthesis; chorismate from D-erythrose 4-phosphate and phosphoenolpyruvate: step 6/7. In terms of biological role, catalyzes the transfer of the enolpyruvyl moiety of phosphoenolpyruvate (PEP) to the 5-hydroxyl of shikimate-3-phosphate (S3P) to produce enolpyruvyl shikimate-3-phosphate and inorganic phosphate. The sequence is that of 3-phosphoshikimate 1-carboxyvinyltransferase from Geobacillus kaustophilus (strain HTA426).